The primary structure comprises 486 residues: Small ribosomal subunit protein uS17B (486 aa).

The segment at 1-112 (MRDIGINGIK…IENKSNINFV (112 aa)) is 30S ribosomal protein S17. The tract at residues 113–486 (DNLLNVDDKW…ELWTRKNYKS (374 aa)) is unknown.

Belongs to the universal ribosomal protein uS17 family. As to quaternary structure, part of the 30S ribosomal subunit.

One of the primary rRNA binding proteins, it binds specifically to the 5'-end of 16S ribosomal RNA. In Methanosarcina acetivorans (strain ATCC 35395 / DSM 2834 / JCM 12185 / C2A), this protein is Small ribosomal subunit protein uS17B.